Consider the following 309-residue polypeptide: Ribonuclease Z (309 aa).

The Zn(2+) site is built by His63, His65, Asp67, His68, His145, Asp216, and His274. The active-site Proton acceptor is the Asp67.

Belongs to the RNase Z family. Homodimer. Requires Zn(2+) as cofactor.

It carries out the reaction Endonucleolytic cleavage of RNA, removing extra 3' nucleotides from tRNA precursor, generating 3' termini of tRNAs. A 3'-hydroxy group is left at the tRNA terminus and a 5'-phosphoryl group is left at the trailer molecule.. In terms of biological role, zinc phosphodiesterase, which displays some tRNA 3'-processing endonuclease activity. Probably involved in tRNA maturation, by removing a 3'-trailer from precursor tRNA. The protein is Ribonuclease Z of Streptococcus uberis (strain ATCC BAA-854 / 0140J).